The chain runs to 36 residues: Omega-agatoxin-Aa1b (36 aa).

The protein belongs to the neurotoxin 04 (omega-agtx) family. 01 (type I omega-agtx) subfamily. As to expression, expressed by the venom gland.

It is found in the secreted. Functionally, omega-agatoxin are antagonist of voltage-gated calcium channels. They block insect neuromuscular transmission presynaptically. This toxin is a blocker of L-type calcium channels (Cav/CACNA1). The chain is Omega-agatoxin-Aa1b from Agelenopsis aperta (North American funnel-web spider).